Here is an 86-residue protein sequence, read N- to C-terminus: Cell division topological specificity factor (86 aa).

Belongs to the MinE family.

Functionally, prevents the cell division inhibition by proteins MinC and MinD at internal division sites while permitting inhibition at polar sites. This ensures cell division at the proper site by restricting the formation of a division septum at the midpoint of the long axis of the cell. The protein is Cell division topological specificity factor of Polaromonas sp. (strain JS666 / ATCC BAA-500).